The primary structure comprises 152 residues: 3-dehydroquinate dehydratase (152 aa).

Y26 functions as the Proton acceptor in the catalytic mechanism. N77, H83, and D90 together coordinate substrate. The active-site Proton donor is the H103. Substrate contacts are provided by residues L104–S105 and R114.

The protein belongs to the type-II 3-dehydroquinase family. In terms of assembly, homododecamer.

The catalysed reaction is 3-dehydroquinate = 3-dehydroshikimate + H2O. It participates in metabolic intermediate biosynthesis; chorismate biosynthesis; chorismate from D-erythrose 4-phosphate and phosphoenolpyruvate: step 3/7. Functionally, catalyzes a trans-dehydration via an enolate intermediate. In Tolumonas auensis (strain DSM 9187 / NBRC 110442 / TA 4), this protein is 3-dehydroquinate dehydratase.